Reading from the N-terminus, the 312-residue chain is Olfactory receptor 4F15 (312 aa).

Residues 1–25 are Extracellular-facing; that stretch reads MNGMNHSVVSEFVFMGLTNSREIQL. N-linked (GlcNAc...) asparagine glycosylation is present at N5. Residues 26–49 traverse the membrane as a helical segment; the sequence is LLFVFSLLFYFASMMGNLVIVFTV. The Cytoplasmic segment spans residues 50-57; sequence TMDAHLHS. A helical membrane pass occupies residues 58-79; that stretch reads PMYFLLANLSIIDMAFCSITAP. The Extracellular segment spans residues 80 to 100; the sequence is KMICDIFKKHKAISFRGCITQ. C97 and C189 are joined by a disulfide. The helical transmembrane segment at 101–120 threads the bilayer; sequence IFFSHALGGTEMVLLIAMAF. Over 121–139 the chain is Cytoplasmic; it reads DRYMAICKPLHYLTIMSPR. Residues 140-158 form a helical membrane-spanning segment; it reads MCLYFLATSSIIGLIHSLV. Residues 159 to 195 are Extracellular-facing; the sequence is QLVFVVDLPFCGPNIFDSFYCDLPRLLRLACTNTQEL. The chain crosses the membrane as a helical span at residues 196–219; the sequence is EFMVTVNSGLISVGSFVLLVISYI. Residues 220–235 are Cytoplasmic-facing; the sequence is FILFTVWKHSSGGLAK. A helical transmembrane segment spans residues 236–258; sequence ALSTLSAHVTVVILFFGPLMFFY. Over 259 to 269 the chain is Extracellular; it reads TWPSPTSHLDK. Residues 270-289 form a helical membrane-spanning segment; the sequence is YLAIFDAFITPFLNPVIYTF. The Cytoplasmic portion of the chain corresponds to 290 to 312; sequence RNKDMKVAMRRLCSRLAHFTKIL.

Belongs to the G-protein coupled receptor 1 family.

It localises to the cell membrane. Its function is as follows. Odorant receptor. The polypeptide is Olfactory receptor 4F15 (OR4F15) (Homo sapiens (Human)).